The sequence spans 435 residues: Transcription activator ACTTR (435 aa).

Residues 16 to 43 constitute a DNA-binding region (zn(2)-C6 fungal-type); the sequence is CDFCTQSKLRCNKNKPSCRRCTIQQQPC. The interval 48–89 is disordered; that stretch reads ARRTGRPPKRPRKANDGQEANEQHGDQDPVTSTPGGSCQQQS. Positions 50-59 are enriched in basic residues; that stretch reads RTGRPPKRPR. Residues 60 to 74 show a composition bias toward basic and acidic residues; that stretch reads KANDGQEANEQHGDQ. Residues 76–89 show a composition bias toward polar residues; sequence PVTSTPGGSCQQQS.

The protein localises to the nucleus. Functionally, transcription factor that regulates the expression of the gene clusters that mediate the biosynthesis of the host-selective toxins (HSTs) ACT-toxins responsible for brown spot of tangerine disease by the tangerine pathotype which affects tangerines and mandarins. ACT-toxins consist of three moieties, 9,10-epoxy-8-hydroxy-9-methyl-decatrienoic acid (EDA), valine and a polyketide. ACT-toxin I is toxic to both citrus and pear; toxin II the 5''-deoxy derivative of ACT-toxin I, is highly toxic to pear and slightly toxic to citrus. On cellular level, ACT-toxins affect plasma membrane of susceptible cells and cause a sudden increase in loss of K(+) after a few minutes of toxin treatment. The sequence is that of Transcription activator ACTTR from Alternaria alternata (Alternaria rot fungus).